The following is a 423-amino-acid chain: Imidazolonepropionase (423 aa).

Fe(3+) is bound by residues His-78 and His-80. Zn(2+) is bound by residues His-78 and His-80. 4-imidazolone-5-propanoate-binding residues include Arg-87, Tyr-150, and His-183. Residue Tyr-150 participates in N-formimidoyl-L-glutamate binding. Residue His-247 participates in Fe(3+) binding. Residue His-247 coordinates Zn(2+). Glu-250 is a binding site for 4-imidazolone-5-propanoate. Asp-322 serves as a coordination point for Fe(3+). Asp-322 contributes to the Zn(2+) binding site. N-formimidoyl-L-glutamate is bound by residues Asn-324 and Gly-326. Ser-327 is a 4-imidazolone-5-propanoate binding site.

This sequence belongs to the metallo-dependent hydrolases superfamily. HutI family. Zn(2+) is required as a cofactor. Requires Fe(3+) as cofactor.

It localises to the cytoplasm. The catalysed reaction is 4-imidazolone-5-propanoate + H2O = N-formimidoyl-L-glutamate. It participates in amino-acid degradation; L-histidine degradation into L-glutamate; N-formimidoyl-L-glutamate from L-histidine: step 3/3. Its function is as follows. Catalyzes the hydrolytic cleavage of the carbon-nitrogen bond in imidazolone-5-propanoate to yield N-formimidoyl-L-glutamate. It is the third step in the universal histidine degradation pathway. This chain is Imidazolonepropionase, found in Bacillus anthracis (strain A0248).